A 597-amino-acid chain; its full sequence is Probable translation initiation factor IF-2 (597 aa).

The region spanning 8-225 (LRQPIVVVLG…LLAGLTQQYL (218 aa)) is the tr-type G domain. Residues 17-24 (GHVDHGKT) form a G1 region. 17–24 (GHVDHGKT) contributes to the GTP binding site. The interval 42–46 (EMTQE) is G2. The tract at residues 81–84 (DTPG) is G3. Residues 81-85 (DTPGH) and 135-138 (NKID) each bind GTP. Positions 135–138 (NKID) are G4. Residues 203–205 (SGK) form a G5 region.

Belongs to the TRAFAC class translation factor GTPase superfamily. Classic translation factor GTPase family. IF-2 subfamily.

In terms of biological role, function in general translation initiation by promoting the binding of the formylmethionine-tRNA to ribosomes. Seems to function along with eIF-2. In Metallosphaera sedula (strain ATCC 51363 / DSM 5348 / JCM 9185 / NBRC 15509 / TH2), this protein is Probable translation initiation factor IF-2.